The sequence spans 272 residues: Putative hydro-lyase Rpal_1947 (272 aa).

Belongs to the D-glutamate cyclase family.

This chain is Putative hydro-lyase Rpal_1947, found in Rhodopseudomonas palustris (strain TIE-1).